Reading from the N-terminus, the 673-residue chain is eEF1A lysine and N-terminal methyltransferase homolog (673 aa).

Belongs to the methyltransferase superfamily.

It catalyses the reaction L-lysyl-[protein] + S-adenosyl-L-methionine = N(6)-methyl-L-lysyl-[protein] + S-adenosyl-L-homocysteine + H(+). The enzyme catalyses N(6)-methyl-L-lysyl-[protein] + S-adenosyl-L-methionine = N(6),N(6)-dimethyl-L-lysyl-[protein] + S-adenosyl-L-homocysteine + H(+). The catalysed reaction is N-terminal glycyl-L-lysyl-L-glutamyl-[protein] + 3 S-adenosyl-L-methionine = N-terminal N,N,N-trimethyl-glycyl-L-lysyl-L-glutamyl-[protein] + 3 S-adenosyl-L-homocysteine + 3 H(+). Functionally, dual methyltransferase. It catalyzes N-terminal methylation of target proteins via its C-terminus. It catalyzes dimethylation on lysine residues of target proteins via its N-terminus. This chain is eEF1A lysine and N-terminal methyltransferase homolog, found in Drosophila melanogaster (Fruit fly).